We begin with the raw amino-acid sequence, 128 residues long: Azurin (128 aa).

Residues 1-128 (ACDVSIEGND…IMKGTIELGS (128 aa)) form the Plastocyanin-like domain. Cys2 and Cys25 are disulfide-bonded. Positions 45, 111, 116, and 120 each coordinate Cu cation.

As to quaternary structure, monomer. Interacts with the AAUA/AAUB heterotetramer complex. The cofactor is Cu cation.

It is found in the periplasm. Transfers electrons from cytochrome c551 to cytochrome oxidase. Transfers electrons from the tryptophan tryptophylquinone of the aromatic amine dehydrogenase heterotetramer. The chain is Azurin from Alcaligenes faecalis.